Consider the following 849-residue polypeptide: Trehalose-phosphatase (849 aa).

A glycosyltransferase region spans residues 1–558 (MPSGAQGNTQ…VKALESHMTT (558 aa)).

In the N-terminal section; belongs to the glycosyltransferase 20 family. The protein in the C-terminal section; belongs to the trehalose phosphatase family. It depends on Mg(2+) as a cofactor.

The protein localises to the cytoplasm. It is found in the nucleus. The enzyme catalyses alpha,alpha-trehalose 6-phosphate + H2O = alpha,alpha-trehalose + phosphate. It functions in the pathway carbohydrate biosynthesis. In terms of biological role, phosphatase catalytic subunit of the trehalose synthase complex that catalyzes the production of trehalose from glucose-6-phosphate and UDP-glucose in a two step process. In Schizosaccharomyces pombe (strain 972 / ATCC 24843) (Fission yeast), this protein is Trehalose-phosphatase (tps2).